A 345-amino-acid chain; its full sequence is Trace amine-associated receptor 6 (345 aa).

Topologically, residues 1-32 (MGSNSSPPAVLQLCYENVNGSCVKTPYSPGPR) are extracellular. N19 carries an N-linked (GlcNAc...) asparagine glycan. 2 disulfides stabilise this stretch: C22-C186 and C105-C190. The helical transmembrane segment at 33–53 (VLLYAVFGFGAVLAVFGNLLV) threads the bilayer. Over 54 to 68 (MISILHFKQLHSPTN) the chain is Cytoplasmic. A helical membrane pass occupies residues 69-89 (FLIASLACADFWVGVSVMPFS). At 90–107 (MVRSIESCWYFGRSFCTF) the chain is on the extracellular side. Residues 108–128 (HTCCDVAFCYSSLFHLSFISI) form a helical membrane-spanning segment. Over 129–147 (DRYIAVTDPLVYPTKFTVS) the chain is Cytoplasmic. A helical membrane pass occupies residues 148-168 (VSGICISISWILPLAYSGAVF). Residues 169–202 (YTGVYADGLEEVSDAVNCVGGCQVVVNQNWVLID) are Extracellular-facing. A helical transmembrane segment spans residues 203 to 223 (FLSFLIPTLVMIILYGNIFLV). Over 224–259 (ARQQAKKIETVGNKAESSSESYKARVARRERKAAKT) the chain is Cytoplasmic. The chain crosses the membrane as a helical span at residues 260 to 276 (LGITVVAFMISWLPYSI). Topologically, residues 277 to 282 (DSLVDA) are extracellular. A helical membrane pass occupies residues 283 to 302 (FMGFITPAYIYEICVWCAYY). Residues 303–345 (NSAMNPLIYALFYPWFKKAIKVIMSGQVFKNSSATMNLFSEQI) lie on the Cytoplasmic side of the membrane.

It belongs to the G-protein coupled receptor 1 family.

The protein localises to the cell membrane. In terms of biological role, olfactory receptor specific for trace amines, such as beta-phenylethylamine (beta-PEA). Trace amine compounds are enriched in animal body fluids and act on trace amine-associated receptors (TAARs) to elicit both intraspecific and interspecific innate behaviors. Beta-PEA-binding causes a conformation change that triggers signaling via G(s)-class of G alpha proteins (GNAL or GNAS). In Rattus norvegicus (Rat), this protein is Trace amine-associated receptor 6 (Taar6).